The following is a 111-amino-acid chain: Large ribosomal subunit protein uL22 (111 aa).

The protein belongs to the universal ribosomal protein uL22 family. Part of the 50S ribosomal subunit.

In terms of biological role, this protein binds specifically to 23S rRNA; its binding is stimulated by other ribosomal proteins, e.g. L4, L17, and L20. It is important during the early stages of 50S assembly. It makes multiple contacts with different domains of the 23S rRNA in the assembled 50S subunit and ribosome. Functionally, the globular domain of the protein is located near the polypeptide exit tunnel on the outside of the subunit, while an extended beta-hairpin is found that lines the wall of the exit tunnel in the center of the 70S ribosome. In Acholeplasma laidlawii, this protein is Large ribosomal subunit protein uL22.